A 471-amino-acid polypeptide reads, in one-letter code: Trigger factor (471 aa).

The PPIase FKBP-type domain occupies 169–264 (GDVAVVDFKG…LKEIKEKELP (96 aa)). The disordered stretch occupies residues 443–471 (SLASQESEITAPETEAETIEVTAESTTGE). The segment covering 448–471 (ESEITAPETEAETIEVTAESTTGE) has biased composition (low complexity).

The protein belongs to the FKBP-type PPIase family. Tig subfamily.

It is found in the cytoplasm. It catalyses the reaction [protein]-peptidylproline (omega=180) = [protein]-peptidylproline (omega=0). Its function is as follows. Involved in protein export. Acts as a chaperone by maintaining the newly synthesized protein in an open conformation. Functions as a peptidyl-prolyl cis-trans isomerase. This chain is Trigger factor, found in Trichormus variabilis (strain ATCC 29413 / PCC 7937) (Anabaena variabilis).